The chain runs to 372 residues: Cytochrome b (372 aa).

4 helical membrane-spanning segments follow: residues 25–45 (FGSM…FLAI), 69–90 (WMMQ…YIHI), 105–125 (WLSG…GYVL), and 170–190 (FFAL…IHIM). Heme b is bound by residues histidine 75 and histidine 89. Residues histidine 174 and histidine 188 each coordinate heme b. Histidine 193 serves as a coordination point for a ubiquinone. Helical transmembrane passes span 218–238 (HKDM…MSFT), 280–300 (LGGT…PFTH), 312–332 (LMQF…WAAT), and 339–358 (FTSI…TMNP).

The protein belongs to the cytochrome b family. The cytochrome bc1 complex contains 3 respiratory subunits (MT-CYB, CYC1 and UQCRFS1), 2 core proteins (UQCRC1 and UQCRC2) and probably 6 low-molecular weight proteins. Requires heme b as cofactor.

The protein localises to the mitochondrion inner membrane. In terms of biological role, component of the ubiquinol-cytochrome c reductase complex (complex III or cytochrome b-c1 complex) that is part of the mitochondrial respiratory chain. The b-c1 complex mediates electron transfer from ubiquinol to cytochrome c. Contributes to the generation of a proton gradient across the mitochondrial membrane that is then used for ATP synthesis. The chain is Cytochrome b (MT-CYB) from Pantherophis vulpinus (Western fox snake).